The primary structure comprises 357 residues: Adenylate isopentenyltransferase 1, chloroplastic (357 aa).

The transit peptide at 1-71 (MTELNFHLLP…NRKDKVVVIL (71 aa)) directs the protein to the chloroplast. A compositionally biased stretch (low complexity) spans 20–39 (TTTSPSFSSHSSSSSSLLSF). The segment at 20–58 (TTTSPSFSSHSSSSSSLLSFTKRRRKHQPLVSSIRMEQS) is disordered. 72 to 79 (GATGAGKS) provides a ligand contact to ATP.

The protein belongs to the IPP transferase family. As to expression, expressed in the vascular stele of the roots, in the xylem precursor cell files in the root tip, in leaf axils, ovules, and immature seeds.

It localises to the plastid. The protein resides in the chloroplast. The catalysed reaction is dimethylallyl diphosphate + AMP = N(6)-(dimethylallyl)adenosine 5'-phosphate + diphosphate. The enzyme catalyses dimethylallyl diphosphate + ADP = N(6)-(dimethylallyl)adenosine 5'-diphosphate + diphosphate. It carries out the reaction dimethylallyl diphosphate + ATP = N(6)-(dimethylallyl)adenosine 5'-triphosphate + diphosphate. Its function is as follows. Involved in cytokinin biosynthesis. Catalyzes the transfer of an isopentenyl group from dimethylallyl diphosphate (DMAPP) to ATP, ADP and AMP. Adenine, adenosine, isopentenylpyrophosphate and 1-hydroxy-2-methyl-2-(E)-butenyl 4-diphosphate (HMBDP) are not used as substrates. This is Adenylate isopentenyltransferase 1, chloroplastic (IPT1) from Arabidopsis thaliana (Mouse-ear cress).